A 313-amino-acid chain; its full sequence is MNKLVDAHCHVITDPDNTFCGDDGGSQGTLRCVMSSNPYDWNNLKKLAGRSTSKNDICVGFGVHPWYSHLFYVGSRRDKVSHYQDVLEYKNEEQFDSLVQVLPEPLDLEEYIKREFNDTLVSVIGEIGLDKLFRLPANGFYMQNEKARLTTVKVKLSHQETVFRRFCRLARHTSKPISIHDVKCHGKLNDICNEELLTYHSVKICLHSYTGSKETLLGQWLKKFPPDRIFVSLSKWINFKDPEEGDALVRSLPSTCILTETDYPIDNPDPSYQKALTEQLQYLNAQIARAWDETLDASQAALRVYENFQKFIK.

Positions 8, 10, 126, 180, 207, and 262 each coordinate a divalent metal cation.

This sequence belongs to the metallo-dependent hydrolases superfamily. TatD-type hydrolase family. The cofactor is a divalent metal cation.

Its function is as follows. Putative deoxyribonuclease. This is an uncharacterized protein from Saccharomyces cerevisiae (strain ATCC 204508 / S288c) (Baker's yeast).